Consider the following 67-residue polypeptide: Phycobilisome 7.8 kDa linker polypeptide, allophycocyanin-associated, core (67 aa).

The CpcD-like domain maps to 1-56 (MRMFRITACVPSQTRIRTQRELQNTYFTKLVPYDNSFREQQRIMKMGGKIVKVELA).

It belongs to the phycobilisome linker protein family.

Its subcellular location is the cellular thylakoid membrane. Its function is as follows. Rod linker protein, associated with allophycocyanin. Linker polypeptides determine the state of aggregation and the location of the disk-shaped phycobiliprotein units within the phycobilisome and modulate their spectroscopic properties in order to mediate a directed and optimal energy transfer. The protein is Phycobilisome 7.8 kDa linker polypeptide, allophycocyanin-associated, core (apcC) of Synechocystis sp. (strain ATCC 27184 / PCC 6803 / Kazusa).